Reading from the N-terminus, the 1168-residue chain is DNA-directed RNA polymerase subunit beta (1168 aa).

It belongs to the RNA polymerase beta chain family. In terms of assembly, the RNAP catalytic core consists of 2 alpha, 1 beta, 1 beta' and 1 omega subunit. When a sigma factor is associated with the core the holoenzyme is formed, which can initiate transcription.

The enzyme catalyses RNA(n) + a ribonucleoside 5'-triphosphate = RNA(n+1) + diphosphate. Its function is as follows. DNA-dependent RNA polymerase catalyzes the transcription of DNA into RNA using the four ribonucleoside triphosphates as substrates. This is DNA-directed RNA polymerase subunit beta from Corynebacterium kroppenstedtii (strain DSM 44385 / JCM 11950 / CIP 105744 / CCUG 35717).